Here is a 602-residue protein sequence, read N- to C-terminus: Laccase 1 (602 aa).

Residues 1–20 form the signal peptide; sequence MDHFARVSLVAALLYTNTWA. Plastocyanin-like domains follow at residues 30 to 128 and 157 to 345; these read TWEE…VRPK and YLVV…RIPN. The Cu cation site is built by H78, H80, H108, and H110. N-linked (GlcNAc...) asparagine glycans are attached at residues N176, N241, N264, N388, N430, N454, and N470. The 124-residue stretch at 461 to 584 folds into the Plastocyanin-like 3 domain; it reads NEGLLLRTRN…GGMGMVIMDG (124 aa). H492, H495, and H497 together coordinate Cu cation. N512 carries N-linked (GlcNAc...) asparagine glycosylation. Cu cation contacts are provided by H566, C567, H568, and H572.

The protein belongs to the multicopper oxidase family. Cu cation is required as a cofactor.

The protein resides in the cell surface. It functions in the pathway pigment biosynthesis. In terms of biological role, laccase; part of the Pks1 gene cluster that mediates the biosynthesis of an anthraquinone derivative pigment that contributes to conidial pigmentation that provides protection from UV radiation, heat and cold stress. The polyketide synthase Pks1 produces 1-acetyl-2,4,6,8-tetrahydroxy-9,10-anthraquinone though condensation of acetyl-CoA with malonyl-CoA. The dehydratase EthD and the laccase Mlac1 further convert the anthraquinone derivative into the final conidial pigment. The polypeptide is Laccase 1 (Metarhizium album (strain ARSEF 1941)).